The sequence spans 152 residues: Aspartate carbamoyltransferase regulatory chain (152 aa).

Zn(2+)-binding residues include cysteine 108, cysteine 113, cysteine 137, and cysteine 140.

This sequence belongs to the PyrI family. In terms of assembly, contains catalytic and regulatory chains. Zn(2+) is required as a cofactor.

Involved in allosteric regulation of aspartate carbamoyltransferase. The polypeptide is Aspartate carbamoyltransferase regulatory chain (Neisseria meningitidis serogroup A / serotype 4A (strain DSM 15465 / Z2491)).